The chain runs to 394 residues: Phosphoglycerate kinase (394 aa).

Substrate-binding positions include 21–23 (DFN), R37, 60–63 (HLGR), R119, and R152. Residues K202, E324, and 350 to 353 (GGDS) contribute to the ATP site.

It belongs to the phosphoglycerate kinase family. Monomer.

The protein localises to the cytoplasm. It carries out the reaction (2R)-3-phosphoglycerate + ATP = (2R)-3-phospho-glyceroyl phosphate + ADP. It functions in the pathway carbohydrate degradation; glycolysis; pyruvate from D-glyceraldehyde 3-phosphate: step 2/5. In Carboxydothermus hydrogenoformans (strain ATCC BAA-161 / DSM 6008 / Z-2901), this protein is Phosphoglycerate kinase.